A 457-amino-acid chain; its full sequence is Siroheme synthase (457 aa).

The tract at residues 1–204 is precorrin-2 dehydrogenase /sirohydrochlorin ferrochelatase; the sequence is MDHLPIFCQL…ADEKAVNATT (204 aa). NAD(+) contacts are provided by residues 22–23 and 43–44; these read DV and LT. Position 128 is a phosphoserine (Ser128). The uroporphyrinogen-III C-methyltransferase stretch occupies residues 216–457; it reads GEVVLVGAGP…RDKLNWFSNH (242 aa). Residue Pro225 participates in S-adenosyl-L-methionine binding. Asp248 serves as the catalytic Proton acceptor. The Proton donor role is filled by Lys270. Residues 301 to 303, Ile306, 331 to 332, Met382, and Gly411 contribute to the S-adenosyl-L-methionine site; these read GGD and TA.

This sequence in the N-terminal section; belongs to the precorrin-2 dehydrogenase / sirohydrochlorin ferrochelatase family. In the C-terminal section; belongs to the precorrin methyltransferase family.

The catalysed reaction is uroporphyrinogen III + 2 S-adenosyl-L-methionine = precorrin-2 + 2 S-adenosyl-L-homocysteine + H(+). It carries out the reaction precorrin-2 + NAD(+) = sirohydrochlorin + NADH + 2 H(+). The enzyme catalyses siroheme + 2 H(+) = sirohydrochlorin + Fe(2+). It participates in cofactor biosynthesis; adenosylcobalamin biosynthesis; precorrin-2 from uroporphyrinogen III: step 1/1. It functions in the pathway cofactor biosynthesis; adenosylcobalamin biosynthesis; sirohydrochlorin from precorrin-2: step 1/1. The protein operates within porphyrin-containing compound metabolism; siroheme biosynthesis; precorrin-2 from uroporphyrinogen III: step 1/1. Its pathway is porphyrin-containing compound metabolism; siroheme biosynthesis; siroheme from sirohydrochlorin: step 1/1. It participates in porphyrin-containing compound metabolism; siroheme biosynthesis; sirohydrochlorin from precorrin-2: step 1/1. Its function is as follows. Multifunctional enzyme that catalyzes the SAM-dependent methylations of uroporphyrinogen III at position C-2 and C-7 to form precorrin-2 via precorrin-1. Then it catalyzes the NAD-dependent ring dehydrogenation of precorrin-2 to yield sirohydrochlorin. Finally, it catalyzes the ferrochelation of sirohydrochlorin to yield siroheme. The protein is Siroheme synthase of Salmonella schwarzengrund (strain CVM19633).